Consider the following 596-residue polypeptide: Signal peptide peptidase-like 2B (596 aa).

The first 21 residues, 1 to 21 (MAARWAQFLLFSLLSLPQVYC), serve as a signal peptide directing secretion. The Lumenal segment spans residues 22-170 (EYGMVHVLSE…APNEPVLDYN (149 aa)). A PA domain is found at 53–147 (HDLGKASLLQ…LLSYSDMLDI (95 aa)). Asn-93 carries N-linked (GlcNAc...) asparagine glycosylation. A helical membrane pass occupies residues 171 to 191 (MVIIFVMAVGTVAIGGYWAGS). Residues 192–219 (RDVKERYMKHKRDDGAEKHEDETVDVTP) lie on the Cytoplasmic side of the membrane. The chain crosses the membrane as a helical span at residues 220–240 (IMICVFVVMCCSMLVLLYFFY). Over 241–242 (DH) the chain is Lumenal. Residues 243–263 (LVYVIIGIFCLAASIGLYSCL) form a helical membrane-spanning segment. The Cytoplasmic segment spans residues 264–289 (SPFVRRFPLGKCRIPDNNLPYFHKRP). Residues 290–310 (QVRILLLAVFCISVSVVWGVF) form a helical membrane-spanning segment. Residues 311-315 (RNEDQ) lie on the Lumenal side of the membrane. Residues 316-336 (WAWVLQDALGIAFCLYMLKTI) form a helical membrane-spanning segment. At 337 to 344 (RLPTFKGC) the chain is on the cytoplasmic side. A helical transmembrane segment spans residues 345–365 (TLLLLVLFVYDVFFVFITPFL). Residue Asp-355 is part of the active site. Residues 366-408 (TKTGESIMVEVAAGPSDSATHEKLPMVLKVPRLNSSPLALCDR) lie on the Lumenal side of the membrane. A helical transmembrane segment spans residues 409-429 (PFSLLGFGDILVPGLLVAYCH). Asp-417 is a catalytic residue. Residues 430–441 (RFDIQVQSSRVY) lie on the Cytoplasmic side of the membrane. A helical membrane pass occupies residues 442–462 (FVACTIAYGIGLLVTFVALAL). Residues 463-466 (MQMG) are Lumenal-facing. Residues 467 to 487 (QPALLYLVPCTLITSFSVALW) traverse the membrane as a helical segment. The PAL signature appears at 468-470 (PAL). The Cytoplasmic segment spans residues 488 to 596 (RKELAMFWTG…SLNLEQKQLE (109 aa)). The segment at 543 to 596 (KELHSPTLAAEEPADNDTKTEQSEVSIAQSEEAAGHNKDDLESKSLNLEQKQLE) is disordered. Basic and acidic residues predominate over residues 575 to 585 (AAGHNKDDLES). A compositionally biased stretch (polar residues) spans 586–596 (KSLNLEQKQLE).

It belongs to the peptidase A22B family.

Its subcellular location is the cell membrane. It is found in the golgi apparatus membrane. The protein localises to the lysosome membrane. It localises to the endosome membrane. The protein resides in the membrane. Its function is as follows. Intramembrane-cleaving aspartic protease (I-CLiP) that cleaves type II membrane signal peptides in the hydrophobic plane of the membrane. The protein is Signal peptide peptidase-like 2B of Gallus gallus (Chicken).